The following is a 98-amino-acid chain: Secreted LysM effector Mgx1LysM (98 aa).

A signal peptide spans M1–A18. 2 cysteine pairs are disulfide-bonded: C31–C89 and C62–C97. Residues I37–I85 form the LysM domain. Chitin contacts are provided by G44, T48, N75, and I77.

This sequence belongs to the secreted LysM effector family. In terms of assembly, forms homodimers in a chitin-independent manner through interactions at the N-termini of Mgx1LysM monomers. Homodimers are further polymerized in a chitin-dependent manner.

It localises to the secreted. Its subcellular location is the cell wall. Functionally, secreted effector that enables the plant pathogenic fungus to manipulate host defenses for successful infection. Binds chitin and suppresses the chitin-induced reactive oxygen species (ROS) burst. Chitin-induced polymerization of homodimers forms a contiguous Mg1LysM highly oligomeric super-complexe that is anchored to the chitin in the fungal cell wall to prevent hydrolysis by host chitinases. The chain is Secreted LysM effector Mgx1LysM from Zymoseptoria tritici (strain ST99CH_3D7).